The following is a 269-amino-acid chain: Shikimate dehydrogenase (NADP(+)) (269 aa).

Shikimate-binding positions include 17 to 19 (SKS) and T64. K68 (proton acceptor) is an active-site residue. D80 lines the NADP(+) pocket. N89 and D105 together coordinate shikimate. NADP(+)-binding positions include 130–134 (GAGGA), 154–159 (NRTHAK), and M213. Residue Y215 coordinates shikimate. G237 contacts NADP(+).

The protein belongs to the shikimate dehydrogenase family. As to quaternary structure, homodimer.

The enzyme catalyses shikimate + NADP(+) = 3-dehydroshikimate + NADPH + H(+). It functions in the pathway metabolic intermediate biosynthesis; chorismate biosynthesis; chorismate from D-erythrose 4-phosphate and phosphoenolpyruvate: step 4/7. Its function is as follows. Involved in the biosynthesis of the chorismate, which leads to the biosynthesis of aromatic amino acids. Catalyzes the reversible NADPH linked reduction of 3-dehydroshikimate (DHSA) to yield shikimate (SA). This chain is Shikimate dehydrogenase (NADP(+)), found in Neisseria polysaccharea.